Consider the following 382-residue polypeptide: uncharacterized protein (382 aa).

The PE domain occupies Met1–Phe92. 8 helical membrane passes run Ser23 to Ala43, Ala155 to Val175, Phe203 to Gly223, Thr230 to Val250, Leu261 to Phe281, Ala284 to Val304, Leu315 to Ala335, and Leu347 to Gly367.

This sequence belongs to the mycobacterial PE family.

The protein resides in the cell membrane. This is an uncharacterized protein from Mycobacterium bovis (strain ATCC BAA-935 / AF2122/97).